The chain runs to 588 residues: Probable fumarate reductase Ifc3 (588 aa).

Residues 1–22 (MKLKYLVSAMALVVLSSGTAMA) form the signal peptide. The heme c site is built by His-31, Cys-37, Cys-40, His-41, Cys-58, Cys-61, His-62, His-78, His-81, Cys-87, Cys-90, His-91, Gly-93, His-94, Cys-101, Cys-104, and His-105. Residues 135–588 (AIAAGPSETT…DNAAKHALDK (454 aa)) form a flavoprotein-like region. FAD contacts are provided by Ala-154, Asp-173, Asn-181, Ser-182, Gly-187, and Gly-188. Gly-187 contacts fumarate. Gly-187 is a succinate binding site. Heme c is bound at residue Arg-218. Residues Val-295 and Asp-361 each contribute to the FAD site. Succinate contacts are provided by His-382, Ser-394, and Glu-395. Positions 394 and 395 each coordinate fumarate. The Proton donor role is filled by Arg-419. Residue His-521 participates in fumarate binding. His-521 serves as a coordination point for succinate. Glu-551 contributes to the FAD binding site. Fumarate contacts are provided by Arg-561 and Gly-564. Arg-561 and Gly-564 together coordinate succinate. FAD-binding residues include Gly-564, Ala-566, and Ile-567.

Homodimer. It depends on FAD as a cofactor. Heme c serves as cofactor.

The protein localises to the periplasm. Functionally, flavocytochrome that catalyzes the reduction of fumarate to succinate in vitro. Is essentially unidirectional, catalyzing only fumarate reduction. In vitro, can use the artificial electron donor methyl viologen. May be involved in an alternative route for electron transport to Fe(3+). The chain is Probable fumarate reductase Ifc3 from Shewanella frigidimarina (strain NCIMB 400).